The sequence spans 137 residues: Probable 4-amino-4-deoxy-L-arabinose-phosphoundecaprenol flippase subunit ArnF (137 aa).

The next 3 membrane-spanning stretches (helical) occupy residues 43-63, 74-94, and 98-118; these read AIAV…FWLL, YSLL…LPFF, and FTVS…TINL.

The protein belongs to the ArnF family. As to quaternary structure, heterodimer of ArnE and ArnF.

It is found in the cell inner membrane. It functions in the pathway bacterial outer membrane biogenesis; lipopolysaccharide biosynthesis. In terms of biological role, translocates 4-amino-4-deoxy-L-arabinose-phosphoundecaprenol (alpha-L-Ara4N-phosphoundecaprenol) from the cytoplasmic to the periplasmic side of the inner membrane. The polypeptide is Probable 4-amino-4-deoxy-L-arabinose-phosphoundecaprenol flippase subunit ArnF (Pseudomonas savastanoi pv. phaseolicola (strain 1448A / Race 6) (Pseudomonas syringae pv. phaseolicola (strain 1448A / Race 6))).